The chain runs to 713 residues: Polyphosphate kinase (713 aa).

Asparagine 63 contributes to the ATP binding site. Positions 394 and 424 each coordinate Mg(2+). Histidine 454 (phosphohistidine intermediate) is an active-site residue. The ATP site is built by tyrosine 487, arginine 583, and histidine 611.

The protein belongs to the polyphosphate kinase 1 (PPK1) family. The cofactor is Mg(2+). Post-translationally, an intermediate of this reaction is the autophosphorylated ppk in which a phosphate is covalently linked to a histidine residue through a N-P bond.

The catalysed reaction is [phosphate](n) + ATP = [phosphate](n+1) + ADP. Its function is as follows. Catalyzes the reversible transfer of the terminal phosphate of ATP to form a long-chain polyphosphate (polyP). The sequence is that of Polyphosphate kinase from Prosthecochloris aestuarii (strain DSM 271 / SK 413).